Reading from the N-terminus, the 734-residue chain is Photosystem I P700 chlorophyll a apoprotein A2 (734 aa).

Transmembrane regions (helical) follow at residues 46–69 (IFAS…FHVA), 135–158 (LYRG…LHLQ), 175–199 (LNHH…HVAI), 273–291 (IAHH…GHMY), 330–353 (LHFQ…QHMY), 369–395 (AALY…IFFI), 417–439 (AIIS…LYVH), and 517–535 (FLVH…LILV). Residues Cys559 and Cys568 each coordinate [4Fe-4S] cluster. The next 2 membrane-spanning stretches (helical) occupy residues 575–596 (AFYL…YWHW) and 643–665 (LSVW…MFLI). Positions 654, 662, and 670 each coordinate chlorophyll a. Trp671 contributes to the phylloquinone binding site. The helical transmembrane segment at 707–727 (LVGLSHFSVGYIFTYAAFLIA) threads the bilayer.

This sequence belongs to the PsaA/PsaB family. The PsaA/B heterodimer binds the P700 chlorophyll special pair and subsequent electron acceptors. PSI consists of a core antenna complex that captures photons, and an electron transfer chain that converts photonic excitation into a charge separation. The eukaryotic PSI reaction center is composed of at least 11 subunits. The cofactor is P700 is a chlorophyll a/chlorophyll a' dimer, A0 is one or more chlorophyll a, A1 is one or both phylloquinones and FX is a shared 4Fe-4S iron-sulfur center..

It is found in the plastid. The protein resides in the chloroplast thylakoid membrane. The enzyme catalyses reduced [plastocyanin] + hnu + oxidized [2Fe-2S]-[ferredoxin] = oxidized [plastocyanin] + reduced [2Fe-2S]-[ferredoxin]. Its function is as follows. PsaA and PsaB bind P700, the primary electron donor of photosystem I (PSI), as well as the electron acceptors A0, A1 and FX. PSI is a plastocyanin-ferredoxin oxidoreductase, converting photonic excitation into a charge separation, which transfers an electron from the donor P700 chlorophyll pair to the spectroscopically characterized acceptors A0, A1, FX, FA and FB in turn. Oxidized P700 is reduced on the lumenal side of the thylakoid membrane by plastocyanin. This is Photosystem I P700 chlorophyll a apoprotein A2 from Chara vulgaris (Common stonewort).